The chain runs to 273 residues: tRNA (guanine-N(7)-)-methyltransferase (273 aa).

Residues G86, E109, R111, N142, A143, and L162 each contribute to the S-adenosyl-L-methionine site. Residue D165 is part of the active site. The tract at residues 166-174 (PHFKKTKHK) is alphaC helix. S-adenosyl-L-methionine-binding residues include T240 and E242. Residues 240–248 (TEEGKKVQR) are alpha6 helix.

The protein belongs to the class I-like SAM-binding methyltransferase superfamily. TrmB family. Catalytic component of the METTL1-WDR4 complex, composed of mettl1 and wdr4.

It is found in the nucleus. It carries out the reaction guanosine(46) in tRNA + S-adenosyl-L-methionine = N(7)-methylguanosine(46) in tRNA + S-adenosyl-L-homocysteine. The enzyme catalyses a guanosine in mRNA + S-adenosyl-L-methionine = an N(7)-methylguanosine in mRNA + S-adenosyl-L-homocysteine. The catalysed reaction is a guanosine in miRNA + S-adenosyl-L-methionine = an N(7)-methylguanosine in miRNA + S-adenosyl-L-homocysteine. Its pathway is tRNA modification; N(7)-methylguanine-tRNA biosynthesis. In terms of biological role, catalytic component of METTL1-WDR4 methyltransferase complex that mediates the formation of N(7)-methylguanine in a subset of RNA species, such as tRNAs, mRNAs and microRNAs (miRNAs). Catalyzes the formation of N(7)-methylguanine at position 46 (m7G46) in a large subset of tRNAs that contain the 5'-RAGGU-3' motif within the variable loop. M7G46 interacts with C13-G22 in the D-loop to stabilize tRNA tertiary structure and protect tRNAs from decay. Also acts as a methyltransferase for a subset of internal N(7)-methylguanine in mRNAs. Internal N(7)-methylguanine methylation of mRNAs in response to stress promotes their relocalization to stress granules, thereby suppressing their translation. Also methylates a specific subset of miRNAs. The sequence is that of tRNA (guanine-N(7)-)-methyltransferase (mettl1) from Xenopus laevis (African clawed frog).